Here is a 263-residue protein sequence, read N- to C-terminus: Eukaryotic translation initiation factor 3 subunit J-B (263 aa).

Acidic residues-rich tracts occupy residues 1 to 13 and 30 to 50; these read MADS…DNFE and EGED…EEKE. Disordered stretches follow at residues 1–75 and 214–235; these read MADS…DKIK and KQKQ…VPGG. A coiled-coil region spans residues 30 to 127; it reads EGEDEEEDVK…EADMELAREA (98 aa). Over residues 51–75 the composition is skewed to basic and acidic residues; the sequence is EEKKVEQKIAEVKPPEKKKLSDKIK.

The protein belongs to the eIF-3 subunit J family. As to quaternary structure, component of the eukaryotic translation initiation factor 3 (eIF-3) complex, which is composed of 13 subunits: eif3a, eif3b, eif3c, eif3d, eif3e, eif3f, eif3g, eif3h, eif3i, eif3j, eif3k, eif3l and eif3m.

It is found in the cytoplasm. Its function is as follows. Component of the eukaryotic translation initiation factor 3 (eIF-3) complex, which is involved in protein synthesis of a specialized repertoire of mRNAs and, together with other initiation factors, stimulates binding of mRNA and methionyl-tRNAi to the 40S ribosome. The eIF-3 complex specifically targets and initiates translation of a subset of mRNAs involved in cell proliferation. This is Eukaryotic translation initiation factor 3 subunit J-B (eif3jb) from Danio rerio (Zebrafish).